The sequence spans 208 residues: Urease accessory protein UreE (208 aa).

Residues Ala-145 to His-195 form a disordered region.

Belongs to the UreE family.

It localises to the cytoplasm. Functionally, involved in urease metallocenter assembly. Binds nickel. Probably functions as a nickel donor during metallocenter assembly. The chain is Urease accessory protein UreE from Azorhizobium caulinodans (strain ATCC 43989 / DSM 5975 / JCM 20966 / LMG 6465 / NBRC 14845 / NCIMB 13405 / ORS 571).